Here is a 311-residue protein sequence, read N- to C-terminus: Aspartate carbamoyltransferase catalytic subunit (311 aa).

2 residues coordinate carbamoyl phosphate: Arg55 and Thr56. Lys85 serves as a coordination point for L-aspartate. 3 residues coordinate carbamoyl phosphate: Arg106, His135, and Gln138. L-aspartate is bound by residues Arg168 and Arg230. The carbamoyl phosphate site is built by Leu268 and Pro269.

This sequence belongs to the aspartate/ornithine carbamoyltransferase superfamily. ATCase family. In terms of assembly, heterododecamer (2C3:3R2) of six catalytic PyrB chains organized as two trimers (C3), and six regulatory PyrI chains organized as three dimers (R2).

The enzyme catalyses carbamoyl phosphate + L-aspartate = N-carbamoyl-L-aspartate + phosphate + H(+). It functions in the pathway pyrimidine metabolism; UMP biosynthesis via de novo pathway; (S)-dihydroorotate from bicarbonate: step 2/3. Its function is as follows. Catalyzes the condensation of carbamoyl phosphate and aspartate to form carbamoyl aspartate and inorganic phosphate, the committed step in the de novo pyrimidine nucleotide biosynthesis pathway. The polypeptide is Aspartate carbamoyltransferase catalytic subunit (Salmonella paratyphi A (strain AKU_12601)).